We begin with the raw amino-acid sequence, 364 residues long: 3-isopropylmalate dehydrogenase (364 aa).

Residue 76 to 89 (GPKWDGNAPEKRPE) participates in NAD(+) binding. Substrate contacts are provided by Arg96, Arg106, Arg134, and Asp223. Mg(2+) is bound by residues Asp223, Asp247, and Asp251. Residue 281-293 (GSAPDIAGTGAAN) coordinates NAD(+).

It belongs to the isocitrate and isopropylmalate dehydrogenases family. LeuB type 1 subfamily. Homodimer. The cofactor is Mg(2+). It depends on Mn(2+) as a cofactor.

The protein localises to the cytoplasm. The catalysed reaction is (2R,3S)-3-isopropylmalate + NAD(+) = 4-methyl-2-oxopentanoate + CO2 + NADH. It functions in the pathway amino-acid biosynthesis; L-leucine biosynthesis; L-leucine from 3-methyl-2-oxobutanoate: step 3/4. In terms of biological role, catalyzes the oxidation of 3-carboxy-2-hydroxy-4-methylpentanoate (3-isopropylmalate) to 3-carboxy-4-methyl-2-oxopentanoate. The product decarboxylates to 4-methyl-2 oxopentanoate. The chain is 3-isopropylmalate dehydrogenase from Shouchella clausii (strain KSM-K16) (Alkalihalobacillus clausii).